The following is a 941-amino-acid chain: Bifunctional glutamine synthetase adenylyltransferase/adenylyl-removing enzyme (941 aa).

Residues 1–437 (MSIPTASLSP…TAEFAELLAP (437 aa)) form an adenylyl removase region. Residues 444–941 (PDTLADYWRA…FPLGKDEAAL (498 aa)) form an adenylyl transferase region.

The protein belongs to the GlnE family. Mg(2+) serves as cofactor.

It carries out the reaction [glutamine synthetase]-O(4)-(5'-adenylyl)-L-tyrosine + phosphate = [glutamine synthetase]-L-tyrosine + ADP. The enzyme catalyses [glutamine synthetase]-L-tyrosine + ATP = [glutamine synthetase]-O(4)-(5'-adenylyl)-L-tyrosine + diphosphate. Functionally, involved in the regulation of glutamine synthetase GlnA, a key enzyme in the process to assimilate ammonia. When cellular nitrogen levels are high, the C-terminal adenylyl transferase (AT) inactivates GlnA by covalent transfer of an adenylyl group from ATP to specific tyrosine residue of GlnA, thus reducing its activity. Conversely, when nitrogen levels are low, the N-terminal adenylyl removase (AR) activates GlnA by removing the adenylyl group by phosphorolysis, increasing its activity. The regulatory region of GlnE binds the signal transduction protein PII (GlnB) which indicates the nitrogen status of the cell. The polypeptide is Bifunctional glutamine synthetase adenylyltransferase/adenylyl-removing enzyme (Xanthomonas oryzae pv. oryzae (strain MAFF 311018)).